Here is a 181-residue protein sequence, read N- to C-terminus: Translation initiation factor IF-3 (181 aa).

It belongs to the IF-3 family. Monomer.

The protein localises to the cytoplasm. Functionally, IF-3 binds to the 30S ribosomal subunit and shifts the equilibrium between 70S ribosomes and their 50S and 30S subunits in favor of the free subunits, thus enhancing the availability of 30S subunits on which protein synthesis initiation begins. The chain is Translation initiation factor IF-3 from Cereibacter sphaeroides (strain ATCC 17023 / DSM 158 / JCM 6121 / CCUG 31486 / LMG 2827 / NBRC 12203 / NCIMB 8253 / ATH 2.4.1.) (Rhodobacter sphaeroides).